We begin with the raw amino-acid sequence, 27 residues long: uncharacterized protein (27 aa).

The protein resides in the plastid. Its subcellular location is the cyanelle. This is an uncharacterized protein from Cyanophora paradoxa.